The chain runs to 284 residues: Tropomyosin alpha-1 chain (284 aa).

The disordered stretch occupies residues 1-37; the sequence is MDAIKKKMQMLKLDKENALDRAEQAETDKKAAEERSK. Residues 1-284 adopt a coiled-coil conformation; it reads MDAIKKKMQM…DHALNDMTSI (284 aa). Positions 12–37 are enriched in basic and acidic residues; that stretch reads KLDKENALDRAEQAETDKKAAEERSK.

The protein belongs to the tropomyosin family. Homodimer. Heterodimer of an alpha (TPM1, TPM3 or TPM4) and a beta (TPM2) chain.

The protein resides in the cytoplasm. It is found in the cytoskeleton. In terms of biological role, binds to actin filaments in muscle and non-muscle cells. Plays a central role, in association with the troponin complex, in the calcium dependent regulation of vertebrate striated muscle contraction. Smooth muscle contraction is regulated by interaction with caldesmon. In non-muscle cells is implicated in stabilizing cytoskeleton actin filaments. The polypeptide is Tropomyosin alpha-1 chain (tpma) (Danio rerio (Zebrafish)).